The primary structure comprises 84 residues: Small ribosomal subunit protein uS17c (84 aa).

This sequence belongs to the universal ribosomal protein uS17 family. As to quaternary structure, part of the 30S ribosomal subunit.

Its subcellular location is the plastid. It is found in the chloroplast. In terms of biological role, one of the primary rRNA binding proteins, it binds specifically to the 5'-end of 16S ribosomal RNA. The protein is Small ribosomal subunit protein uS17c (rps17) of Phaeodactylum tricornutum (strain CCAP 1055/1).